The sequence spans 404 residues: Multidrug resistance protein MdtG (404 aa).

The next 11 membrane-spanning stretches (helical) occupy residues 19-39 (LGCF…PLYV), 56-76 (LVFS…GGLA), 90-110 (LGMA…QFLI), 113-133 (ALLG…ATQV), 144-164 (TLST…GLLA), 171-191 (PVFF…FFFI), 222-242 (LFVT…ILTL), 254-274 (IAFI…LSAP), 288-308 (ILIV…FVQT), 317-337 (FLLG…LVYN), and 376-396 (AVFC…WNSL).

It belongs to the major facilitator superfamily. DHA1 family. MdtG (TC 2.A.1.2.20) subfamily.

The protein localises to the cell inner membrane. This Salmonella arizonae (strain ATCC BAA-731 / CDC346-86 / RSK2980) protein is Multidrug resistance protein MdtG.